The sequence spans 75 residues: Exodeoxyribonuclease 7 small subunit (75 aa).

Belongs to the XseB family. In terms of assembly, heterooligomer composed of large and small subunits.

It localises to the cytoplasm. The catalysed reaction is Exonucleolytic cleavage in either 5'- to 3'- or 3'- to 5'-direction to yield nucleoside 5'-phosphates.. In terms of biological role, bidirectionally degrades single-stranded DNA into large acid-insoluble oligonucleotides, which are then degraded further into small acid-soluble oligonucleotides. The chain is Exodeoxyribonuclease 7 small subunit from Pelobacter propionicus (strain DSM 2379 / NBRC 103807 / OttBd1).